Consider the following 108-residue polypeptide: Protein RnfH (108 aa).

Positions A86–A108 are disordered.

This sequence belongs to the UPF0125 (RnfH) family.

The polypeptide is Protein RnfH (Pseudoalteromonas atlantica (strain T6c / ATCC BAA-1087)).